A 152-amino-acid chain; its full sequence is Ribosome maturation factor RimP (152 aa).

Belongs to the RimP family.

It is found in the cytoplasm. Required for maturation of 30S ribosomal subunits. The chain is Ribosome maturation factor RimP from Francisella tularensis subsp. tularensis (strain FSC 198).